We begin with the raw amino-acid sequence, 365 residues long: MTAAPLMPDSTHPCRRRKSYTFFWCSLGVYAEALLFLLSHLSDACELPRPFEAMELKGTPKLFYAVGEKIEYKCKKGYLYLSPYLMIATCEPNHTWVPISDAGCIKVQCTMLQDPSFGKVYYIDGSFSWGARAKFTCMEGYYVVGMSVLHCVLKGDDEAYWNGYPPHCEKIYCLPPPKIKNGTHTLTDINVFKYHEAVSYSCDPTPGPDKFSLVGTSMIFCAGHNTWSNSPPECKVVKCPNPVLQNGRLISGAGEIFSYQSTVMFECLQGFYMEGSSMVICSANNSWEPSIPKCLKGPRPTHPTKPPVYNYTGYPSPREGIFSQELDAWIIALIVITSIVGVFILCLIVLRCFEHRKKTNVSAAR.

An N-terminal signal peptide occupies residues 1 to 44; that stretch reads MTAAPLMPDSTHPCRRRKSYTFFWCSLGVYAEALLFLLSHLSDA. 4 consecutive Sushi domains span residues 45–106, 107–170, 171–236, and 237–296; these read CELP…GCIK, VQCT…HCEK, IYCL…ECKV, and VKCP…KCLK. Over 45–329 the chain is Extracellular; that stretch reads CELPRPFEAM…GIFSQELDAW (285 aa). Cystine bridges form between Cys-109-Cys-151, Cys-137-Cys-168, Cys-173-Cys-221, Cys-202-Cys-234, Cys-239-Cys-281, and Cys-267-Cys-294. An N-linked (GlcNAc...) asparagine glycan is attached at Asn-181. The O-linked (GalNAc...) threonine glycan is linked to Thr-205. 2 O-linked (GalNAc...) threonine glycosylation sites follow: Thr-301 and Thr-304. N-linked (GlcNAc...) asparagine glycosylation is present at Asn-310. O-linked (GalNAc...) threonine glycosylation is present at Thr-312. The chain crosses the membrane as a helical span at residues 330–350; it reads IIALIVITSIVGVFILCLIVL. At 351–365 the chain is on the cytoplasmic side; the sequence is RCFEHRKKTNVSAAR.

As to quaternary structure, interacts with C3b. Interacts with C4b. Interacts with moesin/MSN. In terms of processing, may be O-glycosylated. N-glycosylated. In terms of tissue distribution, present only in testis (at protein level).

Its subcellular location is the cytoplasmic vesicle. It is found in the secretory vesicle. The protein resides in the acrosome inner membrane. The protein localises to the secreted. Functionally, may be involved in the fusion of the spermatozoa with the oocyte during fertilization. The polypeptide is Membrane cofactor protein (Cd46) (Mus musculus (Mouse)).